Here is a 234-residue protein sequence, read N- to C-terminus: ATP synthase subunit a 2 (234 aa).

5 helical membrane passes run 20–40, 78–98, 107–127, 169–189, and 194–214; these read ATLIFTWLVMGVLVVGSWFVT, YLPFIGTLFIFIALSNLLSVI, SLSTTTALALCVFFAVPLYGV, VMSGTMIVGILLSVAPLFFPV, and LGLLTGVIQAYIFAILAMVFI.

This sequence belongs to the ATPase A chain family. As to quaternary structure, F-type ATPases have 2 components, CF(1) - the catalytic core - and CF(0) - the membrane proton channel. CF(1) has five subunits: alpha(3), beta(3), gamma(1), delta(1), epsilon(1). CF(0) has four main subunits: a, b, b' and c.

It localises to the cellular thylakoid membrane. In terms of biological role, key component of the proton channel; it plays a direct role in the translocation of protons across the membrane. In Acaryochloris marina (strain MBIC 11017), this protein is ATP synthase subunit a 2.